Consider the following 470-residue polypeptide: Tigger transposable element-derived protein 3 (470 aa).

The region spanning 3–55 (LNTKKKLHALSLAEKIQVLELLDESKMSQSEVARRFQVSQPQISRICKNKEKL) is the HTH psq-type domain. DNA-binding regions (H-T-H motif) lie at residues 31 to 51 (QSEV…ICKN) and 100 to 130 (PMLL…WKRR). Residues 67 to 137 (ERKRKRESKY…KRRNNVGFGT (71 aa)) enclose the HTH CENPB-type domain. In terms of domain architecture, DDE-1 spans 167-360 (FSPEDVFGCA…VPRQLILSSF (194 aa)). Over residues 402–421 (DPGPRVCKEETGTEDSGREE) the composition is skewed to basic and acidic residues. Positions 402 to 426 (DPGPRVCKEETGTEDSGREEDGFEP) are disordered.

The protein belongs to the tigger transposable element derived protein family.

Its subcellular location is the nucleus. This is Tigger transposable element-derived protein 3 (Tigd3) from Mus musculus (Mouse).